Here is a 206-residue protein sequence, read N- to C-terminus: 2,3-bisphosphoglycerate-dependent phosphoglycerate mutase (206 aa).

Substrate-binding positions include 9-16 (RHGQSEWN), 22-23 (TG), Arg-61, 88-91 (ERNY), Lys-99, 115-116 (RR), and 159-160 (GN). The Tele-phosphohistidine intermediate role is filled by His-10. Glu-88 acts as the Proton donor/acceptor in catalysis.

The protein belongs to the phosphoglycerate mutase family. BPG-dependent PGAM subfamily. As to quaternary structure, homodimer.

It catalyses the reaction (2R)-2-phosphoglycerate = (2R)-3-phosphoglycerate. The protein operates within carbohydrate degradation; glycolysis; pyruvate from D-glyceraldehyde 3-phosphate: step 3/5. Catalyzes the interconversion of 2-phosphoglycerate and 3-phosphoglycerate. The polypeptide is 2,3-bisphosphoglycerate-dependent phosphoglycerate mutase (Bartonella henselae (strain ATCC 49882 / DSM 28221 / CCUG 30454 / Houston 1) (Rochalimaea henselae)).